The chain runs to 324 residues: Beta-ketoacyl-[acyl-carrier-protein] synthase III (324 aa).

Active-site residues include cysteine 112 and histidine 251. The tract at residues 252 to 256 (QANLR) is ACP-binding. Residue asparagine 281 is part of the active site.

This sequence belongs to the thiolase-like superfamily. FabH family. In terms of assembly, homodimer.

It is found in the cytoplasm. It carries out the reaction malonyl-[ACP] + acetyl-CoA + H(+) = 3-oxobutanoyl-[ACP] + CO2 + CoA. Its pathway is lipid metabolism; fatty acid biosynthesis. Catalyzes the condensation reaction of fatty acid synthesis by the addition to an acyl acceptor of two carbons from malonyl-ACP. Catalyzes the first condensation reaction which initiates fatty acid synthesis and may therefore play a role in governing the total rate of fatty acid production. Possesses both acetoacetyl-ACP synthase and acetyl transacylase activities. Its substrate specificity determines the biosynthesis of branched-chain and/or straight-chain of fatty acids. In Clostridium perfringens (strain ATCC 13124 / DSM 756 / JCM 1290 / NCIMB 6125 / NCTC 8237 / Type A), this protein is Beta-ketoacyl-[acyl-carrier-protein] synthase III.